Consider the following 188-residue polypeptide: Elongation factor P (188 aa).

Lysine 34 is subject to N6-(3,6-diaminohexanoyl)-5-hydroxylysine.

The protein belongs to the elongation factor P family. In terms of processing, may be beta-lysylated on the epsilon-amino group of Lys-34 by the combined action of EpmA and EpmB, and then hydroxylated on the C5 position of the same residue by EpmC (if this protein is present). Lysylation is critical for the stimulatory effect of EF-P on peptide-bond formation. The lysylation moiety may extend toward the peptidyltransferase center and stabilize the terminal 3-CCA end of the tRNA. Hydroxylation of the C5 position on Lys-34 may allow additional potential stabilizing hydrogen-bond interactions with the P-tRNA.

The protein localises to the cytoplasm. It participates in protein biosynthesis; polypeptide chain elongation. Functionally, involved in peptide bond synthesis. Alleviates ribosome stalling that occurs when 3 or more consecutive Pro residues or the sequence PPG is present in a protein, possibly by augmenting the peptidyl transferase activity of the ribosome. Modification of Lys-34 is required for alleviation. The chain is Elongation factor P from Xylella fastidiosa (strain M23).